The primary structure comprises 172 residues: Small t antigen (172 aa).

The residue at position 1 (M1) is an N-acetylmethionine; by host. Residues 12–75 form the J domain; sequence ELMDLLGLER…VKVAHQPDFG (64 aa). Residues 101-114 form a C4-type; atypical zinc finger; it reads CATKPSAHCPCMLC. An H1C3-type; atypical zinc finger spans residues 120–141; that stretch reads HVYRKFLRRDPLVWIDCYCFDC.

In terms of assembly, interacts with host PPP2R1A; the interaction inhibits PP2A activity.

The protein resides in the host cytoplasm. It is found in the host nucleus. Promotes efficient viral genome replication by accelerating both G1 and S phase progression of the cell cycle. Inhibits host PP2A by binding to the A subunit, thereby displacing lower affinity regulatory B subunit. Inactivation of PP2A in turn results in the transactivation of cyclin A and cyclin D1 promoters. Late during the infection cycle, ST may induce dephosphorylation of host MTOR, leading to the inhibition of cap-dependent translation. May establish and maintain high levels of viral genomes during persistent infection in cell culture. The polypeptide is Small t antigen (Simian virus 12 (strain wt100) (SV-12)).